Reading from the N-terminus, the 412-residue chain is CCA-adding enzyme (412 aa).

Residues S41 and K44 each coordinate ATP. Positions 41 and 44 each coordinate CTP. Mg(2+)-binding residues include D53, D55, and D106. ATP is bound by residues H129, K149, and Y158. CTP is bound by residues H129, K149, and Y158.

Belongs to the tRNA nucleotidyltransferase/poly(A) polymerase family. Archaeal CCA-adding enzyme subfamily. As to quaternary structure, homodimer. Requires Mg(2+) as cofactor.

It catalyses the reaction a tRNA precursor + 2 CTP + ATP = a tRNA with a 3' CCA end + 3 diphosphate. It carries out the reaction a tRNA with a 3' CCA end + 2 CTP + ATP = a tRNA with a 3' CCACCA end + 3 diphosphate. Catalyzes the addition and repair of the essential 3'-terminal CCA sequence in tRNAs without using a nucleic acid template. Adds these three nucleotides in the order of C, C, and A to the tRNA nucleotide-73, using CTP and ATP as substrates and producing inorganic pyrophosphate. tRNA 3'-terminal CCA addition is required both for tRNA processing and repair. Also involved in tRNA surveillance by mediating tandem CCA addition to generate a CCACCA at the 3' terminus of unstable tRNAs. While stable tRNAs receive only 3'-terminal CCA, unstable tRNAs are marked with CCACCA and rapidly degraded. The polypeptide is CCA-adding enzyme (Saccharolobus islandicus (strain Y.G.57.14 / Yellowstone #1) (Sulfolobus islandicus)).